Here is a 1237-residue protein sequence, read N- to C-terminus: Cilia- and flagella-associated protein 61 (1237 aa).

A disordered region spans residues 278-301; sequence QDLSVRRSQDAELRSSSQGSQKIV. The segment covering 281–290 has biased composition (basic and acidic residues); the sequence is SVRRSQDAEL.

Component of axonemal radial spokes, the protein complexes that link the outer microtubule doublets with the central pair of microtubules. Interacts with CFAP91/MAATS1, ODAD2/ARMC4, RSPH3A, ROPN1, ROPN1L and RSPH9. Interacts with DYNLT1, DYNC1I2 and TUBB3. Interacts with WDR35, IFT22 and IFT81.

It is found in the cytoplasm. The protein resides in the cytoskeleton. It localises to the flagellum axoneme. In terms of biological role, involved in sperm flagellum assembly. Plays an essential role in the formation of the radial spokes in flagellum axoneme. The chain is Cilia- and flagella-associated protein 61 from Homo sapiens (Human).